Reading from the N-terminus, the 255-residue chain is Large ribosomal subunit protein eL8 (255 aa).

A compositionally biased stretch (basic residues) spans 1 to 16 (MPKAPKKITKPKKAEK). Residues 1–28 (MPKAPKKITKPKKAEKKKNPLFQAKPRS) form a disordered region.

It belongs to the eukaryotic ribosomal protein eL8 family.

This is Large ribosomal subunit protein eL8 (RPL7A) from Tetrahymena thermophila.